Here is a 100-residue protein sequence, read N- to C-terminus: Apolipoprotein C-II (100 aa).

The N-terminal stretch at 1–22 is a signal peptide; that stretch reads MGSRFLLALFLVLLVLGCEVQA. The tract at residues 66–74 is lipid binding; the sequence is SVDEKLRDM. The lipoprotein lipase cofactor stretch occupies residues 78–100; sequence SSAAMTTYASIFTDQILTLLKGE.

The protein belongs to the apolipoprotein C2 family. Post-translationally, proapolipoprotein C-II is synthesized as a sialic acid containing glycoprotein which is subsequently desialylated prior to its proteolytic processing. Proapolipoprotein C-II, the major form found in plasma undergoes proteolytic cleavage of its N-terminal hexapeptide to generate the mature form apolipoprotein C-II, which occurs as the minor form in plasma.

The protein resides in the secreted. In terms of biological role, component of chylomicrons, very low-density lipoproteins (VLDL), low-density lipoproteins (LDL), and high-density lipoproteins (HDL) in plasma. Plays an important role in lipoprotein metabolism as an activator of lipoprotein lipase. In Ellobius talpinus (Northern mole vole), this protein is Apolipoprotein C-II (APOC2).